A 697-amino-acid polypeptide reads, in one-letter code: Potassium-transporting ATPase ATP-binding subunit (697 aa).

Helical transmembrane passes span 55 to 75 (PIMFVVEIGFIITLILSFLPS), 82 to 102 (GWFNITVSLILLFTVLFANFA), 245 to 265 (LTLIFLIVVVTLPIFTNYLGF), and 271 to 291 (VLVALLVCLIPTTIGGLLSAI). Catalysis depends on Asp324, which acts as the 4-aspartylphosphate intermediate. ATP-binding positions include Asp361, Glu365, 393–400 (FKAETRMS), and Lys412. Residues Asp535 and Asp539 each contribute to the Mg(2+) site. The next 3 helical transmembrane spans lie at 605-625 (FAIIPAMFTLAIPQMEALNIM), 633-653 (AILSALIFNAVIIPLLIPLAM), and 677-697 (GGVIVPFIGIKVIDMIVGLFI).

Belongs to the cation transport ATPase (P-type) (TC 3.A.3) family. Type IA subfamily. In terms of assembly, the system is composed of three essential subunits: KdpA, KdpB and KdpC.

The protein resides in the cell membrane. The enzyme catalyses K(+)(out) + ATP + H2O = K(+)(in) + ADP + phosphate + H(+). Its function is as follows. Part of the high-affinity ATP-driven potassium transport (or Kdp) system, which catalyzes the hydrolysis of ATP coupled with the electrogenic transport of potassium into the cytoplasm. This subunit is responsible for energy coupling to the transport system and for the release of the potassium ions to the cytoplasm. The sequence is that of Potassium-transporting ATPase ATP-binding subunit from Bacillus mycoides (strain KBAB4) (Bacillus weihenstephanensis).